The chain runs to 881 residues: Rho GTPase-activating protein 17 (881 aa).

The 233-residue stretch at 14–246 (QTVGRAEKTE…MRAHQDKWAE (233 aa)) folds into the BAR domain. The region spanning 252 to 442 (TPLEEHLKRS…PIIQHADWFF (191 aa)) is the Rho-GAP domain. The span at 459–475 (TPSSNHSFHTGNDSDSG) shows a compositional bias: polar residues. The disordered stretch occupies residues 459 to 482 (TPSSNHSFHTGNDSDSGTLERKRP). Ser-484 and Ser-575 each carry phosphoserine. Residues 511 to 881 (GGTLNRKHIS…IDNDTESTAL (371 aa)) are disordered. Residues 592–617 (RNNSQIASGQNQPQAAAGSHQLSMGQ) are compositionally biased toward polar residues. Residues 637 to 650 (APAPPKPGNPPPGH) show a composition bias toward pro residues. A compositionally biased stretch (low complexity) spans 653–664 (GQSSSGTSQHPP). Pro residues predominate over residues 665–678 (SLSPKPPTRSPSPP). Phosphothreonine occurs at positions 679 and 682. Over residues 679–698 (TQHTGQPPGQPSAPSQLSAP) the composition is skewed to low complexity. A phosphoserine mark is found at Ser-702 and Ser-704. Pro residues-rich tracts occupy residues 712–721 (NHPPPQPPTQ), 752–764 (HTPP…PSTP), and 806–816 (RPSVPPPPQPP). Phosphothreonine occurs at positions 753, 757, and 759. Residues 753–766 (TPPQTPTPPSTPPL) carry the SH3-binding motif. Ser-762 carries the phosphoserine modification. Position 763 is a phosphothreonine (Thr-763). A compositionally biased stretch (polar residues) spans 822-844 (GDSSLTNTAPTASKIVTDSNSRV). A compositionally biased stretch (basic and acidic residues) spans 845–865 (SEPHRSIFPEMHSDSASKDVP). Positions 872–881 (IDNDTESTAL) are enriched in acidic residues.

As to quaternary structure, component of a complex whose core is composed of ARHGAP17, AMOT, PALS1, PATJ and PARD3/PAR3. Interacts with NHERF1, FNBP1, TRIP10, CAPZA (CAPZA1, CAPZA2 or CAPZA3), CAPZB, CD2AP and SH3KBP1/CIN85. In terms of tissue distribution, ubiquitously expressed. Expressed at higher level in heart and placenta.

The protein resides in the membrane. Its subcellular location is the cytoplasm. It localises to the cell junction. The protein localises to the tight junction. In terms of biological role, rho GTPase-activating protein involved in the maintenance of tight junction by regulating the activity of CDC42, thereby playing a central role in apical polarity of epithelial cells. Specifically acts as a GTPase activator for the CDC42 GTPase by converting it to an inactive GDP-bound state. The complex formed with AMOT acts by regulating the uptake of polarity proteins at tight junctions, possibly by deciding whether tight junction transmembrane proteins are recycled back to the plasma membrane or sent elsewhere. Participates in the Ca(2+)-dependent regulation of exocytosis, possibly by catalyzing GTPase activity of Rho family proteins and by inducing the reorganization of the cortical actin filaments. Acts as a GTPase activator in vitro for RAC1. The chain is Rho GTPase-activating protein 17 (ARHGAP17) from Homo sapiens (Human).